Consider the following 579-residue polypeptide: General transcription and DNA repair factor IIH subunit TFB1-3 (579 aa).

BSD domains are found at residues 107 to 161 and 186 to 238; these read LTPA…GKDS and RTNR…YLYS.

Belongs to the TFB1 family. Component of the 7-subunit TFIIH core complex composed of XPB, XPD, TFB1/GTF2H1, GTF2H2/P44, TFB4/GTF2H3, TFB2/GTF2H4 and TFB5/GTF2H5, which is active in NER. The core complex associates with the 3-subunit CDK-activating kinase (CAK) module composed of CYCH1/cyclin H1, CDKD and MAT1/At4g30820 to form the 10-subunit holoenzyme (holo-TFIIH) active in transcription.

It is found in the nucleus. Its function is as follows. Component of the general transcription and DNA repair factor IIH (TFIIH) core complex, which is involved in general and transcription-coupled nucleotide excision repair (NER) of damaged DNA and, when complexed to CAK, in RNA transcription by RNA polymerase II. In NER, TFIIH acts by opening DNA around the lesion to allow the excision of the damaged oligonucleotide and its replacement by a new DNA fragment. In transcription, TFIIH has an essential role in transcription initiation. When the pre-initiation complex (PIC) has been established, TFIIH is required for promoter opening and promoter escape. Phosphorylation of the C-terminal tail (CTD) of the largest subunit of RNA polymerase II by the kinase module CAK controls the initiation of transcription. The polypeptide is General transcription and DNA repair factor IIH subunit TFB1-3 (Arabidopsis thaliana (Mouse-ear cress)).